Consider the following 132-residue polypeptide: Holo-[acyl-carrier-protein] synthase (132 aa).

Mg(2+) contacts are provided by Asp8 and Glu62.

It belongs to the P-Pant transferase superfamily. AcpS family. Mg(2+) serves as cofactor.

Its subcellular location is the cytoplasm. It catalyses the reaction apo-[ACP] + CoA = holo-[ACP] + adenosine 3',5'-bisphosphate + H(+). Functionally, transfers the 4'-phosphopantetheine moiety from coenzyme A to a Ser of acyl-carrier-protein. The sequence is that of Holo-[acyl-carrier-protein] synthase from Polaromonas sp. (strain JS666 / ATCC BAA-500).